A 61-amino-acid chain; its full sequence is Photosystem II reaction center protein K (61 aa).

Residues 1 to 24 (MLNILSFIGICLNSFLYSSSFFVA) constitute a propeptide that is removed on maturation. Residues 40-60 (MPVIPLFFFLLAFVWQAAVSF) form a helical membrane-spanning segment.

It belongs to the PsbK family. PSII is composed of 1 copy each of membrane proteins PsbA, PsbB, PsbC, PsbD, PsbE, PsbF, PsbH, PsbI, PsbJ, PsbK, PsbL, PsbM, PsbT, PsbX, PsbY, PsbZ, Psb30/Ycf12, at least 3 peripheral proteins of the oxygen-evolving complex and a large number of cofactors. It forms dimeric complexes.

It is found in the plastid. It localises to the chloroplast thylakoid membrane. One of the components of the core complex of photosystem II (PSII). PSII is a light-driven water:plastoquinone oxidoreductase that uses light energy to abstract electrons from H(2)O, generating O(2) and a proton gradient subsequently used for ATP formation. It consists of a core antenna complex that captures photons, and an electron transfer chain that converts photonic excitation into a charge separation. This chain is Photosystem II reaction center protein K, found in Cucumis sativus (Cucumber).